The chain runs to 768 residues: Pentatricopeptide repeat-containing protein At3g53360, mitochondrial (768 aa).

The N-terminal 70 residues, 1 to 70 (MATMLRLGAR…SSFKIRLRTY (70 aa)), are a transit peptide targeting the mitochondrion. PPR repeat units lie at residues 30–60 (TEEL…AQKN), 66–100 (RLRT…NCKY), 101–131 (DTIL…MPER), 132–166 (NLVS…DLVP), 167–201 (DQFA…ESSS), 202–232 (HLIA…IPMK), 233–267 (DLIS…GVFH), 269–303 (NEYI…ELAG), 304–334 (NAIA…IERP), 335–369 (DTAS…GFIP), 370–404 (DAIS…GFLA), 405–435 (DLTV…FRNN), 437–471 (DSVS…ECEP), 472–506 (DHIT…GLAP), 507–537 (EQFI…MDNR), 538–572 (DVVS…GIEP), 573–608 (NHVT…GISP), and 609–639 (TKEH…MKLE). Residues 644-719 (VWKTLLSACK…IPGQSWIEIE (76 aa)) are type E motif. Positions 720–750 (DKIHIFFAEDIFHPERDDIYTVLHNIWSQML) are type E(+) motif.

It belongs to the PPR family. PCMP-E subfamily.

Its subcellular location is the mitochondrion. In Arabidopsis thaliana (Mouse-ear cress), this protein is Pentatricopeptide repeat-containing protein At3g53360, mitochondrial (PCMP-E86).